The primary structure comprises 137 residues: uncharacterized protein (137 aa).

This is an uncharacterized protein from Mycobacterium leprae (strain TN).